Reading from the N-terminus, the 275-residue chain is Rhamnulose-1-phosphate aldolase (275 aa).

Glu117 is an active-site residue. Zn(2+) is bound by residues His141, His143, and His212.

It belongs to the aldolase class II family. RhaD subfamily. In terms of assembly, homotetramer. It depends on Zn(2+) as a cofactor.

The protein resides in the cytoplasm. It carries out the reaction L-rhamnulose 1-phosphate = (S)-lactaldehyde + dihydroxyacetone phosphate. The protein operates within carbohydrate degradation; L-rhamnose degradation; glycerone phosphate from L-rhamnose: step 3/3. In terms of biological role, catalyzes the reversible cleavage of L-rhamnulose-1-phosphate to dihydroxyacetone phosphate (DHAP) and L-lactaldehyde. This is Rhamnulose-1-phosphate aldolase from Citrobacter koseri (strain ATCC BAA-895 / CDC 4225-83 / SGSC4696).